A 325-amino-acid chain; its full sequence is Cytochrome c biogenesis protein CcsA (325 aa).

8 helical membrane passes run 14–34 (TFAI…FPNL), 36–56 (GLPA…AALL), 68–88 (ISNL…IHLL), 97–117 (LVGA…AFTL), 142–162 (VMMV…AFLV), 233–253 (VIGL…VWAN), 260–280 (WSWD…AAYL), and 294–314 (AILA…VNLL).

Belongs to the CcmF/CycK/Ccl1/NrfE/CcsA family. In terms of assembly, may interact with ccs1.

Its subcellular location is the cellular thylakoid membrane. Functionally, required during biogenesis of c-type cytochromes (cytochrome c6 and cytochrome f) at the step of heme attachment. The chain is Cytochrome c biogenesis protein CcsA from Synechococcus sp. (strain ATCC 27144 / PCC 6301 / SAUG 1402/1) (Anacystis nidulans).